The chain runs to 139 residues: Ribonuclease P protein component (139 aa).

The disordered stretch occupies residues 116 to 139; sequence FSKNKSTIGGEYSPKNEQCESELP.

Belongs to the RnpA family. In terms of assembly, consists of a catalytic RNA component (M1 or rnpB) and a protein subunit.

It catalyses the reaction Endonucleolytic cleavage of RNA, removing 5'-extranucleotides from tRNA precursor.. Functionally, RNaseP catalyzes the removal of the 5'-leader sequence from pre-tRNA to produce the mature 5'-terminus. It can also cleave other RNA substrates such as 4.5S RNA. The protein component plays an auxiliary but essential role in vivo by binding to the 5'-leader sequence and broadening the substrate specificity of the ribozyme. In Chlamydia abortus (strain DSM 27085 / S26/3) (Chlamydophila abortus), this protein is Ribonuclease P protein component.